The following is an 85-amino-acid chain: Small ribosomal subunit protein uS17 (85 aa).

It belongs to the universal ribosomal protein uS17 family. In terms of assembly, part of the 30S ribosomal subunit.

One of the primary rRNA binding proteins, it binds specifically to the 5'-end of 16S ribosomal RNA. This Pasteurella multocida (strain Pm70) protein is Small ribosomal subunit protein uS17.